The following is a 366-amino-acid chain: UPF0324 membrane protein RSc1111 (366 aa).

A run of 8 helical transmembrane segments spans residues 21-43 (LAGA…TAWA), 103-125 (LGAS…GAWV), 137-159 (AVLV…APAV), 169-191 (AIAS…YALA), 198-220 (VAPA…VIAA), 240-262 (VLAL…LVLE), 283-305 (WFAA…ATWH), and 343-365 (AGVL…RWLA).

This sequence belongs to the UPF0324 family.

Its subcellular location is the cell membrane. The sequence is that of UPF0324 membrane protein RSc1111 from Ralstonia nicotianae (strain ATCC BAA-1114 / GMI1000) (Ralstonia solanacearum).